A 245-amino-acid polypeptide reads, in one-letter code: tRNA1(Val) (adenine(37)-N6)-methyltransferase (245 aa).

This sequence belongs to the methyltransferase superfamily. tRNA (adenine-N(6)-)-methyltransferase family.

The protein localises to the cytoplasm. It catalyses the reaction adenosine(37) in tRNA1(Val) + S-adenosyl-L-methionine = N(6)-methyladenosine(37) in tRNA1(Val) + S-adenosyl-L-homocysteine + H(+). Its function is as follows. Specifically methylates the adenine in position 37 of tRNA(1)(Val) (anticodon cmo5UAC). The chain is tRNA1(Val) (adenine(37)-N6)-methyltransferase from Escherichia fergusonii (strain ATCC 35469 / DSM 13698 / CCUG 18766 / IAM 14443 / JCM 21226 / LMG 7866 / NBRC 102419 / NCTC 12128 / CDC 0568-73).